The chain runs to 310 residues: p-hydroxybenzoic acid efflux pump subunit AaeA (310 aa).

A helical transmembrane segment spans residues A12–Y32.

The protein belongs to the membrane fusion protein (MFP) (TC 8.A.1) family.

The protein localises to the cell inner membrane. In terms of biological role, forms an efflux pump with AaeB. The polypeptide is p-hydroxybenzoic acid efflux pump subunit AaeA (Shigella flexneri).